We begin with the raw amino-acid sequence, 252 residues long: Chitooligosaccharide deacetylase (252 aa).

Positions 61 and 125 each coordinate Mg(2+).

This sequence belongs to the YdjC deacetylase family. ChbG subfamily. As to quaternary structure, homodimer. Mg(2+) serves as cofactor.

The protein resides in the cytoplasm. It catalyses the reaction N,N'-diacetylchitobiose + H2O = N-acetyl-beta-D-glucosaminyl-(1-&gt;4)-D-glucosamine + acetate. It carries out the reaction diacetylchitobiose-6'-phosphate + H2O = N'-monoacetylchitobiose-6'-phosphate + acetate. The protein operates within glycan degradation; chitin degradation. Involved in the degradation of chitin. ChbG is essential for growth on the acetylated chitooligosaccharides chitobiose and chitotriose but is dispensable for growth on cellobiose and chitosan dimer, the deacetylated form of chitobiose. Deacetylation of chitobiose-6-P and chitotriose-6-P is necessary for both the activation of the chb promoter by the regulatory protein ChbR and the hydrolysis of phosphorylated beta-glucosides by the phospho-beta-glucosidase ChbF. Catalyzes the removal of only one acetyl group from chitobiose-6-P to yield monoacetylchitobiose-6-P, the inducer of ChbR and the substrate of ChbF. The polypeptide is Chitooligosaccharide deacetylase (Escherichia coli O45:K1 (strain S88 / ExPEC)).